The following is a 422-amino-acid chain: Enolase (422 aa).

Gln162 lines the (2R)-2-phosphoglycerate pocket. Glu204 acts as the Proton donor in catalysis. Mg(2+) contacts are provided by Asp241, Glu285, and Asp312. (2R)-2-phosphoglycerate is bound by residues Lys337, Arg366, Ser367, and Lys388. The active-site Proton acceptor is the Lys337.

This sequence belongs to the enolase family. Mg(2+) is required as a cofactor.

The protein localises to the cytoplasm. It is found in the secreted. The protein resides in the cell surface. It catalyses the reaction (2R)-2-phosphoglycerate = phosphoenolpyruvate + H2O. It participates in carbohydrate degradation; glycolysis; pyruvate from D-glyceraldehyde 3-phosphate: step 4/5. Functionally, catalyzes the reversible conversion of 2-phosphoglycerate (2-PG) into phosphoenolpyruvate (PEP). It is essential for the degradation of carbohydrates via glycolysis. This chain is Enolase, found in Streptococcus thermophilus.